Reading from the N-terminus, the 230-residue chain is Orotidine 5'-phosphate decarboxylase (230 aa).

Substrate is bound by residues aspartate 10, lysine 31, 58–67, threonine 117, arginine 179, glutamine 188, glycine 208, and arginine 209; that span reads DLKLHDIPNT. The Proton donor role is filled by lysine 60.

The protein belongs to the OMP decarboxylase family. Type 1 subfamily. Homodimer.

The enzyme catalyses orotidine 5'-phosphate + H(+) = UMP + CO2. It functions in the pathway pyrimidine metabolism; UMP biosynthesis via de novo pathway; UMP from orotate: step 2/2. In terms of biological role, catalyzes the decarboxylation of orotidine 5'-monophosphate (OMP) to uridine 5'-monophosphate (UMP). The polypeptide is Orotidine 5'-phosphate decarboxylase (Staphylococcus aureus (strain USA300)).